Reading from the N-terminus, the 145-residue chain is Deoxyuridine 5'-triphosphate nucleotidohydrolase (145 aa).

Substrate is bound by residues 62-64, Asn-75, 79-81, and Lys-89; these read RSG and TVD.

This sequence belongs to the dUTPase family. It depends on Mg(2+) as a cofactor.

The enzyme catalyses dUTP + H2O = dUMP + diphosphate + H(+). The protein operates within pyrimidine metabolism; dUMP biosynthesis; dUMP from dCTP (dUTP route): step 2/2. This enzyme is involved in nucleotide metabolism: it produces dUMP, the immediate precursor of thymidine nucleotides and it decreases the intracellular concentration of dUTP so that uracil cannot be incorporated into DNA. The protein is Deoxyuridine 5'-triphosphate nucleotidohydrolase of Helicobacter pylori (strain ATCC 700392 / 26695) (Campylobacter pylori).